Reading from the N-terminus, the 345-residue chain is Adenine deaminase (345 aa).

His-24, His-26, and His-204 together coordinate Zn(2+). Glu-207 serves as the catalytic Proton donor. Asp-285 contacts Zn(2+). Residue Asp-286 coordinates substrate.

Belongs to the metallo-dependent hydrolases superfamily. Adenosine and AMP deaminases family. Adenine deaminase type 2 subfamily. Zn(2+) serves as cofactor.

It carries out the reaction adenine + H2O + H(+) = hypoxanthine + NH4(+). In terms of biological role, catalyzes the hydrolytic deamination of adenine to hypoxanthine. Plays an important role in the purine salvage pathway and in nitrogen catabolism. This chain is Adenine deaminase, found in Albidiferax ferrireducens (strain ATCC BAA-621 / DSM 15236 / T118) (Rhodoferax ferrireducens).